The primary structure comprises 545 residues: Protein FAR1-RELATED SEQUENCE 9 (545 aa).

Residues 22 to 65 (LNYLKRRQLENPGFLYAIEDDCGNVFWADPTCRLNYTYFGDTLV) enclose the FAR1 domain. The MULE domain occupies 66 to 150 (FDTTYRRGKR…RVFSQTRLRF (85 aa)). The segment at 345–381 (HTVSFDSLEVKANCSCQMFEYSGIICRHILAVFSAKN) adopts an SWIM-type zinc-finger fold. Residues 460-495 (SNRTPGTRLPNGEAYPSEEARETANATNHPGGEKER) form a disordered region. The stretch at 492–545 (EKERTILELTAELERTGQRCEVYRANLLSILRDMEEQKFQLSLKVQNARLSLKE) forms a coiled coil.

Belongs to the FHY3/FAR1 family. As to expression, expressed in hypocotyls, rosette and cauline leaves, inflorescences stems, flowers and siliques.

It localises to the nucleus. Putative transcription activator involved in regulating light control of development. May act as a negative regulator specific to phyB signaling. In Arabidopsis thaliana (Mouse-ear cress), this protein is Protein FAR1-RELATED SEQUENCE 9 (FRS9).